Reading from the N-terminus, the 213-residue chain is Adenylate kinase (213 aa).

14 to 19 is an ATP binding site; that stretch reads GSGKGT. Residues 34-63 form an NMP region; that stretch reads SSGELFRSAIDSASPLGIKAAEYINQGLLV. Residues Ser35, Arg40, 61–63, 89–92, and Gln96 contribute to the AMP site; these read LLV and GFPR. Positions 129–162 are LID; the sequence is SRFICPSCKHVYNQNQGLSECPTCQMKLVRRSDD. An ATP-binding site is contributed by Arg130. 2 residues coordinate Zn(2+): Cys133 and Cys136. Position 139–140 (139–140) interacts with ATP; the sequence is VY. Cys149 and Cys152 together coordinate Zn(2+). Arg159 and Arg170 together coordinate AMP. Residue Ala198 participates in ATP binding.

The protein belongs to the adenylate kinase family. Monomer.

It is found in the cytoplasm. The catalysed reaction is AMP + ATP = 2 ADP. It participates in purine metabolism; AMP biosynthesis via salvage pathway; AMP from ADP: step 1/1. Functionally, catalyzes the reversible transfer of the terminal phosphate group between ATP and AMP. Plays an important role in cellular energy homeostasis and in adenine nucleotide metabolism. This Chlamydia abortus (strain DSM 27085 / S26/3) (Chlamydophila abortus) protein is Adenylate kinase.